A 439-amino-acid polypeptide reads, in one-letter code: Hydroxyornithine transacylase SID3 (439 aa).

A PTS1-type peroxisomal targeting signal motif is present at residues 437-439; it reads SKL.

This sequence belongs to the lysine N-acyltransferase mbtK family.

The protein resides in the peroxisome. It participates in siderophore biosynthesis. Functionally, hydroxyornithine transacylase; part of the gene cluster that mediates the biosynthesis of hydroxamate-containing siderophores that play a critical role in virulence via intracellular iron acquisition during macrophage infection. The chain is Hydroxyornithine transacylase SID3 from Ajellomyces capsulatus (Darling's disease fungus).